The sequence spans 127 residues: MNTPKELRYTKEHEWVRVEGENVRIGITDYAQSELGDIVFVELPEVGAEVTANEPFGSVESVKTVSELYAPISGTVVEVNEALNDHPEYVNESPYDKAWMIVVKPNDLSEIDNLLTAEQYEAMINEG.

One can recognise a Lipoyl-binding domain in the interval 22–104 (NVRIGITDYA…YDKAWMIVVK (83 aa)). Lysine 63 is subject to N6-lipoyllysine.

This sequence belongs to the GcvH family. As to quaternary structure, the glycine cleavage system is composed of four proteins: P, T, L and H. (R)-lipoate serves as cofactor.

The glycine cleavage system catalyzes the degradation of glycine. The H protein shuttles the methylamine group of glycine from the P protein to the T protein. Its function is as follows. Is also involved in protein lipoylation via its role as an octanoyl/lipoyl carrier protein intermediate. The protein is Glycine cleavage system H protein of Geobacillus kaustophilus (strain HTA426).